A 426-amino-acid polypeptide reads, in one-letter code: MRIDIGAALDATATPGVPPDALDRLDDRVAHAHDRITAGMDGDEFGYAALNLPRTVDVDAITAAADAVADADTLVTVGIGGSALGAATLVDALGDDDLDYHALDNVDPAHVTRLLDRIDLSTSAVHVVSRSGTTAETLANFLVVRDAMDDAGVDWTARTLVTTGDDGPLRALADTHDLPVLDAPRGVPGRFAALSTVALPAAAIAGVDVGELVAGAADGRAALAGSLEDCSAYAYGATAYALDQRGAGVNAMLPYAERLETFAEWFAQLWAESLGKDGVGQTPARALGATDQHSQLQLYRAGPRDKLVTMLRPASRPDCAIPEAELADIDYLTGGDLGALLDAEFEATAASLAASGVPTVRVEVPAVDARSVGRLLFDFEAACVLAGELYGVETFTQPAVEWGKNAARELLRGEDPLPETETHIVE.

The active-site Proton donor is the glutamate 272. Active-site residues include histidine 293 and lysine 404.

Belongs to the GPI family.

It localises to the cytoplasm. It catalyses the reaction alpha-D-glucose 6-phosphate = beta-D-fructose 6-phosphate. Its pathway is carbohydrate biosynthesis; gluconeogenesis. The protein operates within carbohydrate degradation; glycolysis; D-glyceraldehyde 3-phosphate and glycerone phosphate from D-glucose: step 2/4. Functionally, catalyzes the reversible isomerization of glucose-6-phosphate to fructose-6-phosphate. The polypeptide is Probable glucose-6-phosphate isomerase (Halobacterium salinarum (strain ATCC 700922 / JCM 11081 / NRC-1) (Halobacterium halobium)).